The chain runs to 177 residues: Large ribosomal subunit protein uL6 (177 aa).

Belongs to the universal ribosomal protein uL6 family. In terms of assembly, part of the 50S ribosomal subunit.

Its function is as follows. This protein binds to the 23S rRNA, and is important in its secondary structure. It is located near the subunit interface in the base of the L7/L12 stalk, and near the tRNA binding site of the peptidyltransferase center. The sequence is that of Large ribosomal subunit protein uL6 from Paracoccus denitrificans (strain Pd 1222).